The sequence spans 417 residues: Pre-mRNA-splicing factor RBM22 (417 aa).

Residues 159–186 (RNRPHICSFWVKGECKRGEECPYRHEKP) form a C3H1-type zinc finger. The RRM domain occupies 232–305 (TTLYVGGLGD…RRLNVKWGRS (74 aa)). Disordered stretches follow at residues 303-348 (GRSQ…SANY) and 369-417 (GLSG…PSSG). Over residues 309–318 (RGKEREHDGS) the composition is skewed to basic and acidic residues. Positions 369-391 (GLSGPPPGFGPHMFPPMAPPPFL) are enriched in pro residues.

The protein belongs to the SLT11 family. In terms of assembly, component of the pre-catalytic and catalytic spliceosome complexes. Component of the postcatalytic spliceosome P complex.

The protein resides in the nucleus. The protein localises to the cytoplasm. Functionally, required for pre-mRNA splicing as component of the activated spliceosome. Involved in the first step of pre-mRNA splicing. Binds directly to the internal stem-loop (ISL) domain of the U6 snRNA and to the pre-mRNA intron near the 5' splice site during the activation and catalytic phases of the spliceosome cycle. The polypeptide is Pre-mRNA-splicing factor RBM22 (rbm22) (Xenopus laevis (African clawed frog)).